The following is a 101-amino-acid chain: NAD(P)H-quinone oxidoreductase subunit 4L, chloroplastic (101 aa).

2 helical membrane-spanning segments follow: residues M2–I22 and I61–V81.

This sequence belongs to the complex I subunit 4L family. As to quaternary structure, NDH is composed of at least 16 different subunits, 5 of which are encoded in the nucleus.

The protein resides in the plastid. The protein localises to the chloroplast thylakoid membrane. It carries out the reaction a plastoquinone + NADH + (n+1) H(+)(in) = a plastoquinol + NAD(+) + n H(+)(out). It catalyses the reaction a plastoquinone + NADPH + (n+1) H(+)(in) = a plastoquinol + NADP(+) + n H(+)(out). Functionally, NDH shuttles electrons from NAD(P)H:plastoquinone, via FMN and iron-sulfur (Fe-S) centers, to quinones in the photosynthetic chain and possibly in a chloroplast respiratory chain. The immediate electron acceptor for the enzyme in this species is believed to be plastoquinone. Couples the redox reaction to proton translocation, and thus conserves the redox energy in a proton gradient. The polypeptide is NAD(P)H-quinone oxidoreductase subunit 4L, chloroplastic (Dioscorea elephantipes (Elephant's foot yam)).